Here is a 268-residue protein sequence, read N- to C-terminus: NH(3)-dependent NAD(+) synthetase (268 aa).

G46–S53 serves as a coordination point for ATP. D52 is a Mg(2+) binding site. R140 contributes to the deamido-NAD(+) binding site. An ATP-binding site is contributed by T160. Residue E165 participates in Mg(2+) binding. Residues K173 and D180 each coordinate deamido-NAD(+). ATP-binding residues include K189 and T211. Deamido-NAD(+) is bound at residue H260–K261.

It belongs to the NAD synthetase family. As to quaternary structure, homodimer.

It catalyses the reaction deamido-NAD(+) + NH4(+) + ATP = AMP + diphosphate + NAD(+) + H(+). It functions in the pathway cofactor biosynthesis; NAD(+) biosynthesis; NAD(+) from deamido-NAD(+) (ammonia route): step 1/1. Its function is as follows. Catalyzes the ATP-dependent amidation of deamido-NAD to form NAD. Uses ammonia as a nitrogen source. The protein is NH(3)-dependent NAD(+) synthetase of Buchnera aphidicola subsp. Schizaphis graminum (strain Sg).